We begin with the raw amino-acid sequence, 280 residues long: Eukaryotic translation initiation factor 3 subunit F-1 (280 aa).

The region spanning 8–138 (VRVHPVVLFQ…LRSYVCIQLG (131 aa)) is the MPN domain.

This sequence belongs to the eIF-3 subunit F family. As to quaternary structure, component of the eukaryotic translation initiation factor 3 (eIF-3) complex. The eIF-3 complex interacts with pix.

It is found in the cytoplasm. Functionally, component of the eukaryotic translation initiation factor 3 (eIF-3) complex, which is involved in protein synthesis of a specialized repertoire of mRNAs and, together with other initiation factors, stimulates binding of mRNA and methionyl-tRNAi to the 40S ribosome. The eIF-3 complex specifically targets and initiates translation of a subset of mRNAs involved in cell proliferation. In Drosophila persimilis (Fruit fly), this protein is Eukaryotic translation initiation factor 3 subunit F-1.